Here is a 312-residue protein sequence, read N- to C-terminus: DNA-directed RNA polymerase subunit alpha (312 aa).

Residues 1 to 226 (MIEFEKPNIT…EHFKVFMSTD (226 aa)) form an alpha N-terminal domain (alpha-NTD) region. An alpha C-terminal domain (alpha-CTD) region spans residues 243–312 (NEKKLEMTIE…DLGLSLRQDD (70 aa)).

Belongs to the RNA polymerase alpha chain family. As to quaternary structure, homodimer. The RNAP catalytic core consists of 2 alpha, 1 beta, 1 beta' and 1 omega subunit. When a sigma factor is associated with the core the holoenzyme is formed, which can initiate transcription.

The enzyme catalyses RNA(n) + a ribonucleoside 5'-triphosphate = RNA(n+1) + diphosphate. In terms of biological role, DNA-dependent RNA polymerase catalyzes the transcription of DNA into RNA using the four ribonucleoside triphosphates as substrates. The protein is DNA-directed RNA polymerase subunit alpha of Lactobacillus johnsonii (strain CNCM I-12250 / La1 / NCC 533).